The chain runs to 506 residues: Nostrin (506 aa).

The F-BAR domain maps to 1 to 260 (MRDPLTDCPY…AISKIDIEKD (260 aa)). The residue at position 114 (S114) is a Phosphoserine. Positions 160-222 (SMTEKEKRKL…LELEKERIQL (63 aa)) form a coiled coil. Positions 292–372 (AMDKERRKSL…SYKLSSMLAE (81 aa)) constitute an REM-1 domain. In terms of domain architecture, SH3 spans 438 to 497 (LSSRLCKALYSFQARQDDELNLEKGDIVIIHEKKEGGWWFGSLNGKKGHFPAAYVEELPS). S479 is subject to Phosphoserine.

Homotrimer. Interacts with DAB2. Interacts with NOS3, DNM2, WASL and CAV1. Interacts (via SH3 domain) with DNM2; this interaction allows the recruitment of NOS3 to dynamin-positive structures. In terms of tissue distribution, expressed at highest levels in heart, kidney, placenta and lung, and at lowest levels in brain, thymus and spleen. Present in vascular endothelial cells and placenta. Over-expressed in placenta from women with pre-eclampsia (at protein level).

It localises to the cell membrane. The protein resides in the cytoplasmic vesicle. It is found in the cytoplasm. The protein localises to the cytoskeleton. Its subcellular location is the nucleus. Multivalent adapter protein which may decrease NOS3 activity by inducing its translocation away from the plasma membrane. The sequence is that of Nostrin from Homo sapiens (Human).